The sequence spans 626 residues: MTKQEKAINLSESAQVDQQSVQPFPRSRKVYVEGSRPDIRVPMREISLDDTPTDFGGETNAPVLVYDTSGPYTDPNVIIDVRKGLADVRSAWIDARGDTERLDGLSSDFGQQRLNDAELAKLRFAHVRNPRRAKAGANVSQMHYARRGIITAEMEYVAIRENMKLQEARAAGLLKEQHAGHSFGANIPKEITPEFVRQEIARGRAIIPANINHPEVEPMIIGRNFLVKINGNIGNSALGSSIEEEVAKLTWGIRWGSDTVMDLSTGKHIHETREWIIRNSPVPIGTVPIYQALEKVNGVAEDLIWELFRDTLIEQAEQGVDYFTIHAGVLLRYVPLTAKRVTGIVSRGGSIMAKWCLAHHKENFLYTHFDEICEIMKAYDVSFSLGDGLRPGSIADANDAAQFGELETLGELTKIAWKHDVQCMIEGPGHVPMQLIKENMDKQLECCDEAPFYTLGPLTTDIAPGYDHITSGIGAAMIGWFGCAMLCYVTPKEHLGLPNKDDVKTGIITYKIAAHAADLAKGHPGAQIRDNALSKARFEFRWEDQFNLGLDPDTARAFHDETLPKESAKVAHFCSMCGPKFCSMKITQEVREYAAKIEAVDVTVEEGMREQAERFRQEGSQLYHKV.

Residues 1–22 (MTKQEKAINLSESAQVDQQSVQ) are disordered. The span at 10–22 (LSESAQVDQQSVQ) shows a compositional bias: polar residues. Substrate-binding positions include Asn-232, Met-261, Tyr-290, His-326, 346-348 (SRG), 387-390 (DGLR), and Glu-426. His-430 is a binding site for Zn(2+). Tyr-453 contributes to the substrate binding site. His-494 provides a ligand contact to Zn(2+). The [4Fe-4S] cluster site is built by Cys-574, Cys-577, and Cys-582.

This sequence belongs to the ThiC family. In terms of assembly, homodimer. It depends on [4Fe-4S] cluster as a cofactor.

It carries out the reaction 5-amino-1-(5-phospho-beta-D-ribosyl)imidazole + S-adenosyl-L-methionine = 4-amino-2-methyl-5-(phosphooxymethyl)pyrimidine + CO + 5'-deoxyadenosine + formate + L-methionine + 3 H(+). It participates in cofactor biosynthesis; thiamine diphosphate biosynthesis. Catalyzes the synthesis of the hydroxymethylpyrimidine phosphate (HMP-P) moiety of thiamine from aminoimidazole ribotide (AIR) in a radical S-adenosyl-L-methionine (SAM)-dependent reaction. In Pseudomonas putida (strain GB-1), this protein is Phosphomethylpyrimidine synthase.